The following is a 410-amino-acid chain: Segmentation protein fushi tarazu (410 aa).

Disordered stretches follow at residues 71 to 93, 138 to 157, and 175 to 221; these read TQTVPPVQPTTPPPKATKRKAED, PAVSTKVTASPAPSYDQEYV, and SPQS…SAVS. Positions 76 to 85 are enriched in pro residues; sequence PVQPTTPPPK. Over residues 190 to 199 the composition is skewed to pro residues; sequence TPPPTTPTSL. Residues 254 to 313 constitute a DNA-binding region (homeobox); sequence SKRTRQTYTRYQTLELEKEFHFNRYITRRRRIDIANALSLSERQIKIWFQNRRMKSKKDR.

This sequence belongs to the Antp homeobox family. In terms of processing, phosphorylated at as many as 16 sites. Expressed early in development in a striped pattern at the blastoderm stage. Later expressed in a specific subset of neuronal precursor cells, neurons and glia in the developing CNS. Between 5 and 6 hours of development, found in the midline precursor-2 cells in a segmentally repeating pattern. Expression in many other neuronal precursors follows and reaches a second peak of abundance at 9 hours of development. Expressed in the hindgut between 11-15 hours of development.

It localises to the nucleus. Functionally, may play a role in determining neuronal identity, may be directly involved in specifying identity of individual neurons. Required during embryogenesis for the process of body segmentation. Homeotic protein, required in alternating segment primordia, it specifies the correct number of segments. In Drosophila melanogaster (Fruit fly), this protein is Segmentation protein fushi tarazu (ftz).